Consider the following 302-residue polypeptide: Sulfate adenylyltransferase subunit 2 (302 aa).

The protein belongs to the PAPS reductase family. CysD subfamily. Heterodimer composed of CysD, the smaller subunit, and CysN.

It catalyses the reaction sulfate + ATP + H(+) = adenosine 5'-phosphosulfate + diphosphate. It participates in sulfur metabolism; hydrogen sulfide biosynthesis; sulfite from sulfate: step 1/3. Functionally, with CysN forms the ATP sulfurylase (ATPS) that catalyzes the adenylation of sulfate producing adenosine 5'-phosphosulfate (APS) and diphosphate, the first enzymatic step in sulfur assimilation pathway. APS synthesis involves the formation of a high-energy phosphoric-sulfuric acid anhydride bond driven by GTP hydrolysis by CysN coupled to ATP hydrolysis by CysD. The sequence is that of Sulfate adenylyltransferase subunit 2 from Zymomonas mobilis subsp. mobilis (strain ATCC 31821 / ZM4 / CP4).